Here is a 384-residue protein sequence, read N- to C-terminus: Somatostatin receptor type 4 (384 aa).

The interval 1 to 34 (MNTPATLPLGGEDTTWTPGINASWAPDEEEDAVR) is disordered. The Extracellular segment spans residues 1–41 (MNTPATLPLGGEDTTWTPGINASWAPDEEEDAVRSDGTGTA). A glycan (N-linked (GlcNAc...) asparagine) is linked at N21. The chain crosses the membrane as a helical span at residues 42 to 69 (GMVTIQCIYALVCLVGLVGNALVIFVIL). At 70 to 79 (RYAKMKTATN) the chain is on the cytoplasmic side. The chain crosses the membrane as a helical span at residues 80–105 (IYLLNLAVADELFMLSVPFVASAAAL). Over 106 to 116 (RHWPFGAVLCR) the chain is Extracellular. A disulfide bond links C115 and C194. A helical transmembrane segment spans residues 117-138 (AVLSVDGLNMFTSVFCLTVLSV). Over 139-160 (DRYVAVVHPLRAATYRRPSVAK) the chain is Cytoplasmic. The chain crosses the membrane as a helical span at residues 161–181 (LINLGVWLASLLVTLPIAVFA). Residues 182–203 (DTRPARGGEAVACNLHWPHPAW) are Extracellular-facing. Residues 204-228 (SAVFVIYTFLLGFLLPVLAIGLCYL) traverse the membrane as a helical segment. The Cytoplasmic segment spans residues 229-254 (LIVGKMRAVALRAGWQQRRRSEKKIT). A helical membrane pass occupies residues 255 to 280 (RLVLMVVTVFVLCWMPFYVVQLLNLF). Residues 281 to 287 (VTSLDAT) are Extracellular-facing. Residues 288 to 311 (VNHVSLILSYANSCANPILYGFLS) form a helical membrane-spanning segment. Residues 312–384 (DNFRRSFQRV…RVPFTKTTTF (73 aa)) are Cytoplasmic-facing. The S-palmitoyl cysteine moiety is linked to residue C323.

Belongs to the G-protein coupled receptor 1 family. As to expression, brain, lung, heart and islets. Moderate levels in the hippocampus, cortex and olfactory bulb.

Its subcellular location is the cell membrane. In terms of biological role, receptor for somatostatin-14. The activity of this receptor is mediated by G proteins which inhibits adenylyl cyclase. It is functionally coupled not only to inhibition of adenylate cyclase, but also to activation of both arachidonate release and mitogen-activated protein (MAP) kinase cascade. The sequence is that of Somatostatin receptor type 4 (Sstr4) from Rattus norvegicus (Rat).